Consider the following 798-residue polypeptide: Pentatricopeptide repeat-containing protein At5g67570, chloroplastic (798 aa).

Disordered stretches follow at residues 1-21 and 50-73; these read MDASVVRFSQSPARVPPEFEP and IQKHNRRTKRETESEAEVYTEAQK. PPR repeat units lie at residues 254–284, 290–324, 340–374, 375–409, 410–444, 445–480, 481–511, 515–545, 553–587, and 588–622; these read SRFVYTKLLSVLGFARRPQEALQIFNQMLGD, DMAAYHCIAVTLGQAGLLKELLKVIERMRQKPTKL, DLVVYNAILNACVPTLQWKAVSWVFVELRKNGLRP, NGATYGLAMEVMLESGKFDRVHDFFRKMKSSGEAP, KAITYKVLVRALWREGKIEEAVEAVRDMEQKGVIG, TGSVYYELACCLCNNGRWCDAMLEVGRMKRLENCRP, LEITFTGLIAASLNGGHVDDCMAIFQYMKDK, NIGTANMMLKVYGRNDMFSEAKELFEEIVSR, NEYTYSFMLEASARSLQWEYFEHVYQTMVLSGYQM, and DQTKHASMLIEASRAGKWSLLEHAFDAVLEDGEIP.

Belongs to the PPR family. P subfamily. Interacts (via C-terminus) with SIGF (via N-terminus).

Its subcellular location is the plastid. It is found in the chloroplast. Involved in the regulation of early chloroplast development and chloroplast gene expression in a SIGF-dependent manner. This chain is Pentatricopeptide repeat-containing protein At5g67570, chloroplastic (DG1), found in Arabidopsis thaliana (Mouse-ear cress).